The sequence spans 493 residues: Cytochrome c-552 (493 aa).

The first 25 residues, M1–G25, serve as a signal peptide directing secretion. Position 116 (H116) interacts with heme c. Residues C144, C147, and K148 each coordinate heme. C182, C185, H186, C224, C227, and H228 together coordinate heme c. Ca(2+) contacts are provided by E230, Y231, K276, and Q278. Y231 lines the substrate pocket. H279 contacts substrate. 9 residues coordinate heme c: H290, C297, C300, H301, H315, C328, C331, H332, and H407.

Belongs to the cytochrome c-552 family. Requires Ca(2+) as cofactor. Heme c is required as a cofactor.

The protein localises to the periplasm. It catalyses the reaction 6 Fe(III)-[cytochrome c] + NH4(+) + 2 H2O = 6 Fe(II)-[cytochrome c] + nitrite + 8 H(+). It participates in nitrogen metabolism; nitrate reduction (assimilation). In terms of biological role, catalyzes the reduction of nitrite to ammonia, consuming six electrons in the process. This is Cytochrome c-552 from Bacteroides thetaiotaomicron (strain ATCC 29148 / DSM 2079 / JCM 5827 / CCUG 10774 / NCTC 10582 / VPI-5482 / E50).